A 520-amino-acid chain; its full sequence is Peptide chain release factor 3 (520 aa).

The region spanning 8-273 (EIRKTFAIIS…AYVDHAPMPS (266 aa)) is the tr-type G domain. GTP-binding positions include 17–24 (SHPDAGKT), 85–89 (DTPGH), and 139–142 (NKLD).

This sequence belongs to the TRAFAC class translation factor GTPase superfamily. Classic translation factor GTPase family. PrfC subfamily.

The protein localises to the cytoplasm. In terms of biological role, increases the formation of ribosomal termination complexes and stimulates activities of RF-1 and RF-2. It binds guanine nucleotides and has strong preference for UGA stop codons. It may interact directly with the ribosome. The stimulation of RF-1 and RF-2 is significantly reduced by GTP and GDP, but not by GMP. This Macrococcus caseolyticus (strain JCSC5402) (Macrococcoides caseolyticum) protein is Peptide chain release factor 3.